The following is a 126-amino-acid chain: Histone H2B type 1-N (126 aa).

Residues 1 to 12 show a composition bias toward low complexity; that stretch reads MPEPSKSAPAPK. Residues 1–36 form a disordered region; it reads MPEPSKSAPAPKKGSKKAVTKAQKKDGKKRKRSRKE. At P2 the chain carries N-acetylproline. Residue E3 is modified to ADP-ribosyl glutamic acid. An N6-(2-hydroxyisobutyryl)lysine; alternate modification is found at K6. At K6 the chain carries N6-(beta-hydroxybutyryl)lysine; alternate. K6 carries the N6-acetyllysine; alternate modification. K6 carries the N6-butyryllysine; alternate modification. Residue K6 is modified to N6-crotonyllysine; alternate. K6 is modified (N6-lactoyllysine; alternate). A Glycyl lysine isopeptide (Lys-Gly) (interchain with G-Cter in SUMO2); alternate cross-link involves residue K6. S7 carries the ADP-ribosylserine modification. K12 carries the N6-(beta-hydroxybutyryl)lysine; alternate modification. An N6-acetyllysine; alternate mark is found at K12 and K13. N6-crotonyllysine; alternate is present on residues K12 and K13. K12 is modified (N6-lactoyllysine; alternate). K13 bears the N6-(2-hydroxyisobutyryl)lysine; alternate mark. The residue at position 15 (S15) is a Phosphoserine; by STK4/MST1. An N6-acetyllysine; alternate mark is found at K16, K17, K21, and K24. 4 positions are modified to N6-crotonyllysine; alternate: K16, K17, K21, and K24. K16, K17, K21, and K24 each carry N6-lactoyllysine; alternate. Position 17 is an N6-glutaryllysine; alternate (K17). Residues K21 and K24 each carry the N6-(2-hydroxyisobutyryl)lysine; alternate modification. K21 is modified (N6-(beta-hydroxybutyryl)lysine; alternate). Position 21 is an N6-butyryllysine; alternate (K21). K21 is covalently cross-linked (Glycyl lysine isopeptide (Lys-Gly) (interchain with G-Cter in SUMO2); alternate). K25 carries the N6-(2-hydroxyisobutyryl)lysine modification. At K35 the chain carries N6-(2-hydroxyisobutyryl)lysine; alternate. N6-(beta-hydroxybutyryl)lysine; alternate is present on K35. An N6-crotonyllysine; alternate modification is found at K35. K35 is modified (N6-glutaryllysine; alternate). At K35 the chain carries N6-succinyllysine; alternate. A Glycyl lysine isopeptide (Lys-Gly) (interchain with G-Cter in ubiquitin); alternate cross-link involves residue K35. E36 carries the post-translational modification PolyADP-ribosyl glutamic acid. Position 37 is a phosphoserine; by AMPK (S37). K44, K47, and K58 each carry N6-(2-hydroxyisobutyryl)lysine; alternate. The residue at position 44 (K44) is an N6-lactoyllysine; alternate. An N6-glutaryllysine; alternate mark is found at K44 and K47. K47 is modified (N6-methyllysine; alternate). N6,N6-dimethyllysine; alternate is present on K58. R80 is modified (dimethylated arginine). Residue K86 is modified to N6-(2-hydroxyisobutyryl)lysine; alternate. At K86 the chain carries N6-acetyllysine; alternate. The residue at position 86 (K86) is an N6-lactoyllysine; alternate. N6,N6,N6-trimethyllysine; alternate is present on K86. Omega-N-methylarginine is present on residues R87 and R93. N6-(2-hydroxyisobutyryl)lysine; alternate is present on K109. K109 bears the N6-lactoyllysine; alternate mark. K109 is subject to N6-glutaryllysine; alternate. K109 is subject to N6-methyllysine; alternate. S113 carries an O-linked (GlcNAc) serine glycan. Position 116 is a phosphothreonine (T116). N6-(2-hydroxyisobutyryl)lysine; alternate is present on residues K117 and K121. An N6-(beta-hydroxybutyryl)lysine; alternate modification is found at K117. 2 positions are modified to N6-lactoyllysine; alternate: K117 and K121. Residues K117 and K121 each carry the N6-glutaryllysine; alternate modification. Residues K117 and K121 each carry the N6-succinyllysine; alternate modification. K117 is modified (N6-methylated lysine; alternate). K121 is covalently cross-linked (Glycyl lysine isopeptide (Lys-Gly) (interchain with G-Cter in ubiquitin); alternate).

Belongs to the histone H2B family. The nucleosome is a histone octamer containing two molecules each of H2A, H2B, H3 and H4 assembled in one H3-H4 heterotetramer and two H2A-H2B heterodimers. The octamer wraps approximately 147 bp of DNA. Monoubiquitination at Lys-35 (H2BK34Ub) by the MSL1/MSL2 dimer is required for histone H3 'Lys-4' (H3K4me) and 'Lys-79' (H3K79me) methylation and transcription activation at specific gene loci, such as HOXA9 and MEIS1 loci. Similarly, monoubiquitination at Lys-121 (H2BK120Ub) by the RNF20/40 complex gives a specific tag for epigenetic transcriptional activation and is also prerequisite for histone H3 'Lys-4' and 'Lys-79' methylation. It also functions cooperatively with the FACT dimer to stimulate elongation by RNA polymerase II. H2BK120Ub also acts as a regulator of mRNA splicing: deubiquitination by USP49 is required for efficient cotranscriptional splicing of a large set of exons. In terms of processing, phosphorylated on Ser-15 (H2BS14ph) by STK4/MST1 during apoptosis; which facilitates apoptotic chromatin condensation. Also phosphorylated on Ser-15 in response to DNA double strand breaks (DSBs), and in correlation with somatic hypermutation and immunoglobulin class-switch recombination. Phosphorylation at Ser-37 (H2BS36ph) by AMPK in response to stress promotes transcription. Post-translationally, glcNAcylation at Ser-113 promotes monoubiquitination of Lys-121. It fluctuates in response to extracellular glucose, and associates with transcribed genes. ADP-ribosylated by PARP1 or PARP2 on Ser-7 (H2BS6ADPr) in response to DNA damage. H2BS6ADPr promotes recruitment of CHD1L. Mono-ADP-ribosylated on Glu-3 (H2BE2ADPr) by PARP3 in response to single-strand breaks. Poly ADP-ribosylation on Glu-36 (H2BE35ADPr) by PARP1 regulates adipogenesis: it inhibits phosphorylation at Ser-37 (H2BS36ph), thereby blocking expression of pro-adipogenetic genes. In terms of processing, crotonylation (Kcr) is specifically present in male germ cells and marks testis-specific genes in post-meiotic cells, including X-linked genes that escape sex chromosome inactivation in haploid cells. Crotonylation marks active promoters and enhancers and confers resistance to transcriptional repressors. It is also associated with post-meiotically activated genes on autosomes. Post-translationally, lactylated in macrophages by EP300/P300 by using lactoyl-CoA directly derived from endogenous or exogenous lactate, leading to stimulates gene transcription.

The protein resides in the nucleus. The protein localises to the chromosome. In terms of biological role, core component of nucleosome. Nucleosomes wrap and compact DNA into chromatin, limiting DNA accessibility to the cellular machineries which require DNA as a template. Histones thereby play a central role in transcription regulation, DNA repair, DNA replication and chromosomal stability. DNA accessibility is regulated via a complex set of post-translational modifications of histones, also called histone code, and nucleosome remodeling. This Bos taurus (Bovine) protein is Histone H2B type 1-N (H2BC15).